We begin with the raw amino-acid sequence, 138 residues long: Small ribosomal subunit protein uS11 (138 aa).

Residues 1 to 12 (MAPKKPGAAGPK) are compositionally biased toward low complexity. Disordered regions lie at residues 1–27 (MAPK…NVPH) and 119–138 (ISDV…RRRV). A compositionally biased stretch (basic residues) spans 13-22 (KAQKTRRREK).

The protein belongs to the universal ribosomal protein uS11 family. In terms of assembly, part of the 30S ribosomal subunit. Interacts with proteins S7 and S18. Binds to IF-3.

In terms of biological role, located on the platform of the 30S subunit, it bridges several disparate RNA helices of the 16S rRNA. Forms part of the Shine-Dalgarno cleft in the 70S ribosome. This chain is Small ribosomal subunit protein uS11, found in Mycobacteroides abscessus (strain ATCC 19977 / DSM 44196 / CCUG 20993 / CIP 104536 / JCM 13569 / NCTC 13031 / TMC 1543 / L948) (Mycobacterium abscessus).